The chain runs to 984 residues: Mediator of RNA polymerase II transcription subunit 5 (984 aa).

The protein belongs to the Mediator complex subunit 5 family. As to quaternary structure, component of the Mediator complex.

Its subcellular location is the nucleus. In terms of biological role, component of the Mediator complex, a coactivator involved in the regulated transcription of nearly all RNA polymerase II-dependent genes. Mediator functions as a bridge to convey information from gene-specific regulatory proteins to the basal RNA polymerase II transcription machinery. Mediator is recruited to promoters by direct interactions with regulatory proteins and serves as a scaffold for the assembly of a functional preinitiation complex with RNA polymerase II and the general transcription factors. In Phaeosphaeria nodorum (strain SN15 / ATCC MYA-4574 / FGSC 10173) (Glume blotch fungus), this protein is Mediator of RNA polymerase II transcription subunit 5 (NUT1).